The chain runs to 229 residues: Wtf element wtf14 (229 aa).

Over residues 1–26 the composition is skewed to basic and acidic residues; the sequence is MENNHHLAKDSLDELNPKRGKGEHET. Residues 1–27 are disordered; that stretch reads MENNHHLAKDSLDELNPKRGKGEHETQ. The next 4 membrane-spanning stretches (helical) occupy residues 71-91, 100-120, 151-171, and 188-208; these read IPAV…YLVF, VLFG…LLAT, LYAI…LMFF, and VIGV…PGLF.

This sequence belongs to the WTF family.

The protein resides in the endoplasmic reticulum membrane. Its function is as follows. May act in meiotic drive. The chain is Wtf element wtf14 from Schizosaccharomyces pombe (strain 972 / ATCC 24843) (Fission yeast).